The sequence spans 230 residues: MNTTIIWHGHSNFQINANGISVLIDPFFTNNPRCTKNWNEIQKPDIVLITHDHSDHLGDAIAICKSTGALCGCIVGTADKLIQQGMPQHLIIGEIGFNIGGTIERKGVRITMTQSFHTSESGSPAGYIITMPNNFTLYHPGDTGIFQTMKTFGKLYNLHLSLLPIGGFFTMDSYQAAYAAKMLKCKMVIPMHWGTFPVLEQTPERFKNYLKAMAPECKYIAMEPNTSKEL.

It belongs to the UPF0173 family.

The chain is UPF0173 metal-dependent hydrolase LI0883 from Lawsonia intracellularis (strain PHE/MN1-00).